A 413-amino-acid polypeptide reads, in one-letter code: E3 ubiquitin ligase ICP22 (413 aa).

Residues 1-124 (MADIPPDPPA…PPRKSKRPRI (124 aa)) form a disordered region. The segment covering 62-76 (GDLRGGRRRSPRELG) has biased composition (basic and acidic residues). Low complexity predominate over residues 84 to 97 (SAESTTGTESEGTG). Y189 carries the phosphotyrosine; by host modification. Disordered stretches follow at residues 289-334 (LETN…SASG) and 370-390 (AERS…PERE). Positions 297-309 (SDDEISDATDSDD) are enriched in acidic residues.

The protein belongs to the herpesviridae ICP22 family. Tyrosine phosphorylated.

The protein localises to the host nucleus. The protein operates within protein modification; protein ubiquitination. Functions as an E3 ubiquitin ligase and plays a role in the inhibition of innate immunity by preventing IFN-mediated signaling. Induces the ubiquitination and degradation of host STAT1, STAT2 and IRF9, resulting in the blockade of ISGF3 nuclear translocation. The sequence is that of E3 ubiquitin ligase ICP22 from Human herpesvirus 2 (strain HG52) (HHV-2).